An 861-amino-acid polypeptide reads, in one-letter code: Probable linoleate 9S-lipoxygenase 8 (861 aa).

One can recognise a PLAT domain in the interval 33–160; the sequence is FTDLASSLTG…NYKSDRIFFA (128 aa). Positions 163–861 constitute a Lipoxygenase domain; it reads PYLPSETPEL…GKGIPNSVSI (699 aa). A disordered region spans residues 220 to 245; that stretch reads TLGGSAEYPYPRRGRTGRPPTRTDPK. Histidine 522, histidine 527, histidine 713, asparagine 717, and isoleucine 861 together coordinate Fe cation.

It belongs to the lipoxygenase family. Monomer. Requires Fe cation as cofactor.

The protein resides in the cytoplasm. It catalyses the reaction (9Z,12Z)-octadecadienoate + O2 = (9S)-hydroperoxy-(10E,12Z)-octadecadienoate. It participates in lipid metabolism; oxylipin biosynthesis. Functionally, plant lipoxygenases may be involved in a number of diverse aspects of plant physiology including growth and development, pest resistance, and senescence or responses to wounding. Catalyzes the hydroperoxidation of lipids containing a cis,cis-1,4-pentadiene structure. The sequence is that of Probable linoleate 9S-lipoxygenase 8 (LOX1.8) from Solanum tuberosum (Potato).